A 270-amino-acid polypeptide reads, in one-letter code: MNYYFTKGKPQLVNMKTPIYLVTQFQQLMDLMQNQYEVSCLELMQRSGKAACDFLVYRWPKVKKISIFCGRGDNGGQGYVLAQQAKKMGMVPTVWQVGHQMSMSKPPQMHKEVWYEMNSCHQQGIVLHTYSPDIDLGDPELIVDALFGVGLYGHVRPEIALLLQRLQQFTVPILAIEVPTGINASTGEIAGNALAATATITFLCMKLGLLINDGKIYSGEIAFDDLLAPEAIYQQVKGIEESSLLDSSTFFSKKIWYRNKTQKGWQLSIN.

One can recognise a YjeF N-terminal domain in the interval 25 to 234 (FQQLMDLMQN…DLLAPEAIYQ (210 aa)). 73–77 (DNGGQ) contacts (6S)-NADPHX. K(+) contacts are provided by Asn-74 and Asp-144. (6S)-NADPHX contacts are provided by residues 148–154 (GVGLYGH) and Glu-177. Thr-180 provides a ligand contact to K(+).

It belongs to the NnrE/AIBP family. K(+) serves as cofactor.

The catalysed reaction is (6R)-NADHX = (6S)-NADHX. It catalyses the reaction (6R)-NADPHX = (6S)-NADPHX. Its function is as follows. Catalyzes the epimerization of the S- and R-forms of NAD(P)HX, a damaged form of NAD(P)H that is a result of enzymatic or heat-dependent hydration. This is a prerequisite for the S-specific NAD(P)H-hydrate dehydratase to allow the repair of both epimers of NAD(P)HX. The protein is NAD(P)H-hydrate epimerase of Legionella pneumophila serogroup 1 (strain 2300/99 Alcoy).